Consider the following 138-residue polypeptide: Large ribosomal subunit protein uL14 (138 aa).

It belongs to the universal ribosomal protein uL14 family. In terms of assembly, part of the 50S ribosomal subunit. Forms a cluster with proteins L3 and L24e, part of which may contact the 16S rRNA in 2 intersubunit bridges.

Its function is as follows. Binds to 23S rRNA. Forms part of two intersubunit bridges in the 70S ribosome. The protein is Large ribosomal subunit protein uL14 of Metallosphaera sedula (strain ATCC 51363 / DSM 5348 / JCM 9185 / NBRC 15509 / TH2).